Here is a 638-residue protein sequence, read N- to C-terminus: LIM domain kinase 2 (638 aa).

2 LIM zinc-binding domains span residues 12–63 and 72–124; these read CRGC…CHKD and CHGC…CGKC. The PDZ domain occupies 152–239; sequence LISMPATTEC…TLQLLIEHDP (88 aa). The residue at position 210 (T210) is a Phosphothreonine. Residues 255–304 form a disordered region; it reads PHMQSTGHTLMLSTLDTKENQEGTLRRRSLRRSNSISKSPGPSSPKEPLL. Positions 257–269 are enriched in polar residues; it reads MQSTGHTLMLSTL. The segment covering 270 to 279 has biased composition (basic and acidic residues); the sequence is DTKENQEGTL. The span at 286-304 shows a compositional bias: low complexity; that stretch reads RSNSISKSPGPSSPKEPLL. A phosphoserine mark is found at S293 and S298. A Protein kinase domain is found at 331–608; that stretch reads LIHGEVLGKG…DSFEALSLFL (278 aa). Residues 337–345 and K360 each bind ATP; that span reads LGKGFFGQA. The active site involves D451. Position 505 is a phosphothreonine; by ROCK1 and CDC42BP (T505).

It belongs to the protein kinase superfamily. TKL Ser/Thr protein kinase family. As to quaternary structure, binds ROCK1 and MARF1. Interacts with NISCH. Phosphorylated on serine and/or threonine residues by ROCK1. As to expression, specifically expressed in the testes.

The protein localises to the cytoplasm. Its subcellular location is the cytoskeleton. It is found in the spindle. It localises to the microtubule organizing center. The protein resides in the centrosome. The protein localises to the nucleus. Its subcellular location is the perinuclear region. The catalysed reaction is L-seryl-[protein] + ATP = O-phospho-L-seryl-[protein] + ADP + H(+). It catalyses the reaction L-threonyl-[protein] + ATP = O-phospho-L-threonyl-[protein] + ADP + H(+). Functionally, serine/threonine-protein kinase that plays an essential role in the regulation of actin filament dynamics. Acts downstream of several Rho family GTPase signal transduction pathways. Involved in astral microtubule organization and mitotic spindle orientation during early stages of mitosis by mediating phosphorylation of TPPP. Displays serine/threonine-specific phosphorylation of myelin basic protein and histone (MBP) in vitro. Suppresses ciliogenesis via multiple pathways; phosphorylation of CFL1, suppression of directional trafficking of ciliary vesicles to the ciliary base, and by facilitating YAP1 nuclear localization where it acts as a transcriptional corepressor of the TEAD4 target genes AURKA and PLK1. This Mus musculus (Mouse) protein is LIM domain kinase 2 (Limk2).